Reading from the N-terminus, the 318-residue chain is Acetaldehyde dehydrogenase 1 (318 aa).

15–18 (SGNI) serves as a coordination point for NAD(+). The active-site Acyl-thioester intermediate is C133. NAD(+) is bound by residues 164-172 (SAGPGTRAN) and N289.

This sequence belongs to the acetaldehyde dehydrogenase family.

It catalyses the reaction acetaldehyde + NAD(+) + CoA = acetyl-CoA + NADH + H(+). This is Acetaldehyde dehydrogenase 1 (xylQ) from Azotobacter vinelandii (strain DJ / ATCC BAA-1303).